Reading from the N-terminus, the 200-residue chain is Holliday junction branch migration complex subunit RuvA (200 aa).

Residues 1 to 64 (MYAYFRGELI…EDLMQLYGFI (64 aa)) are domain I. Positions 65–143 (EEEERQLFLL…KLQQTRPGKT (79 aa)) are domain II. The tract at residues 144-154 (AGAGSVASLSE) is flexible linker. Positions 154–200 (EDALQALMTLGFSRASAQQAVTRALLSAENPGVEDIVREALQNIRNH) are domain III.

The protein belongs to the RuvA family. Homotetramer. Forms an RuvA(8)-RuvB(12)-Holliday junction (HJ) complex. HJ DNA is sandwiched between 2 RuvA tetramers; dsDNA enters through RuvA and exits via RuvB. An RuvB hexamer assembles on each DNA strand where it exits the tetramer. Each RuvB hexamer is contacted by two RuvA subunits (via domain III) on 2 adjacent RuvB subunits; this complex drives branch migration. In the full resolvosome a probable DNA-RuvA(4)-RuvB(12)-RuvC(2) complex forms which resolves the HJ.

The protein resides in the cytoplasm. The RuvA-RuvB-RuvC complex processes Holliday junction (HJ) DNA during genetic recombination and DNA repair, while the RuvA-RuvB complex plays an important role in the rescue of blocked DNA replication forks via replication fork reversal (RFR). RuvA specifically binds to HJ cruciform DNA, conferring on it an open structure. The RuvB hexamer acts as an ATP-dependent pump, pulling dsDNA into and through the RuvAB complex. HJ branch migration allows RuvC to scan DNA until it finds its consensus sequence, where it cleaves and resolves the cruciform DNA. The sequence is that of Holliday junction branch migration complex subunit RuvA from Prosthecochloris aestuarii (strain DSM 271 / SK 413).